Reading from the N-terminus, the 428-residue chain is D-amino acid dehydrogenase (428 aa).

3–17 (VVILGSGVVGVASAY) contributes to the FAD binding site.

Belongs to the DadA oxidoreductase family. It depends on FAD as a cofactor.

It carries out the reaction a D-alpha-amino acid + A + H2O = a 2-oxocarboxylate + AH2 + NH4(+). It participates in amino-acid degradation; D-alanine degradation; NH(3) and pyruvate from D-alanine: step 1/1. Oxidative deamination of D-amino acids. The chain is D-amino acid dehydrogenase from Burkholderia vietnamiensis (strain G4 / LMG 22486) (Burkholderia cepacia (strain R1808)).